The primary structure comprises 563 residues: Probable lysosomal cobalamin transporter (563 aa).

A run of 5 helical transmembrane segments spans residues 8–28, 40–60, 95–115, 144–164, and 188–208; these read LIWF…SVFI, FVTF…MLLP, VIYY…IPFA, YTLA…FAPM, and AFTF…VFYT. N-linked (GlcNAc...) asparagine glycosylation occurs at Asn-228. The next 4 helical transmembrane spans lie at 314–334, 374–394, 416–436, and 506–526; these read GGFS…MTVI, IIFA…VVAV, MLLA…SVVM, and FGAL…VILV. The disordered stretch occupies residues 537–563; it reads ERQLDEDAEEAEEESLLASTGRSGNPT. Residues 539 to 551 are compositionally biased toward acidic residues; sequence QLDEDAEEAEEES.

The protein belongs to the LIMR family. LMBRD1 subfamily.

It localises to the lysosome membrane. Functionally, probable lysosomal cobalamin transporter. Required to export cobalamin from lysosomes allowing its conversion to cofactors. The chain is Probable lysosomal cobalamin transporter from Neosartorya fischeri (strain ATCC 1020 / DSM 3700 / CBS 544.65 / FGSC A1164 / JCM 1740 / NRRL 181 / WB 181) (Aspergillus fischerianus).